We begin with the raw amino-acid sequence, 198 residues long: Nucleoside triphosphate pyrophosphatase (198 aa).

The active-site Proton acceptor is D72.

It belongs to the Maf family. A divalent metal cation is required as a cofactor.

Its subcellular location is the cytoplasm. The catalysed reaction is a ribonucleoside 5'-triphosphate + H2O = a ribonucleoside 5'-phosphate + diphosphate + H(+). The enzyme catalyses a 2'-deoxyribonucleoside 5'-triphosphate + H2O = a 2'-deoxyribonucleoside 5'-phosphate + diphosphate + H(+). Its function is as follows. Nucleoside triphosphate pyrophosphatase. May have a dual role in cell division arrest and in preventing the incorporation of modified nucleotides into cellular nucleic acids. The polypeptide is Nucleoside triphosphate pyrophosphatase (Corynebacterium diphtheriae (strain ATCC 700971 / NCTC 13129 / Biotype gravis)).